A 1067-amino-acid chain; its full sequence is Kinesin-like protein KIF11-A (1067 aa).

Residues 18–359 (NIQVVVRCRP…LDYASRAKNI (342 aa)) form the Kinesin motor domain. 105–112 (GQTGTGKT) is a binding site for ATP. Coiled coils occupy residues 365-480 (VNQK…QEAF), 692-721 (DSSS…HSEG), and 882-915 (QAQE…QVQS). At threonine 937 the chain carries Phosphothreonine; by CDK1. The residue at position 1046 (serine 1046) is a Phosphoserine; by NEK6.

The protein belongs to the TRAFAC class myosin-kinesin ATPase superfamily. Kinesin family. BimC subfamily. As to quaternary structure, heterotetramer of two heavy and two light chains. Interacts with aurka. Phosphorylation of Thr-937 during mitosis controls the association of this protein with the spindle apparatus. Post-translationally, a subset of this protein primarily localized at the spindle pole is phosphorylated by NEK6 during mitosis. In terms of processing, phosphorylated on a serine residue by aurka. As to expression, highly expressed in unfertilized eggs, especially in the germinal vesicle and in the radial yolk-poor channels. Also present in testis.

It is found in the cytoplasm. Its subcellular location is the cytoskeleton. The protein resides in the spindle pole. Plus end-directed motor protein required for establishing a bipolar spindle. Associates with both interphase and spindle microtubules. May be involved in nuclear divisions taking place during the development of unfertilized eggs. Required in non-mitotic cells for transport of secretory proteins from the Golgi complex to the cell surface. The polypeptide is Kinesin-like protein KIF11-A (kif11-a) (Xenopus laevis (African clawed frog)).